Here is a 205-residue protein sequence, read N- to C-terminus: Type III pantothenate kinase (205 aa).

5 to 12 is a binding site for ATP; the sequence is DIGNTTYH. Substrate-binding positions include Tyr-68 and 72–75; that span reads GIDR. Catalysis depends on Asp-74, which acts as the Proton acceptor. K(+) is bound at residue Asp-89. Ser-92 lines the ATP pocket. Position 144 (Ser-144) interacts with substrate.

The protein belongs to the type III pantothenate kinase family. Homodimer. The cofactor is NH4(+). It depends on K(+) as a cofactor.

The protein resides in the cytoplasm. It catalyses the reaction (R)-pantothenate + ATP = (R)-4'-phosphopantothenate + ADP + H(+). It participates in cofactor biosynthesis; coenzyme A biosynthesis; CoA from (R)-pantothenate: step 1/5. Catalyzes the phosphorylation of pantothenate (Pan), the first step in CoA biosynthesis. In Sulfurimonas denitrificans (strain ATCC 33889 / DSM 1251) (Thiomicrospira denitrificans (strain ATCC 33889 / DSM 1251)), this protein is Type III pantothenate kinase.